The primary structure comprises 201 residues: Recombination protein RecR (201 aa).

The segment at 59-74 (CSRCQNFCEAELCSIC) adopts a C4-type zinc-finger fold. In terms of domain architecture, Toprim spans 82–177 (RVLCVVESPT…PVSRIAHGIP (96 aa)).

It belongs to the RecR family.

Its function is as follows. May play a role in DNA repair. It seems to be involved in an RecBC-independent recombinational process of DNA repair. It may act with RecF and RecO. The sequence is that of Recombination protein RecR from Hahella chejuensis (strain KCTC 2396).